A 312-amino-acid polypeptide reads, in one-letter code: Protoheme IX farnesyltransferase (312 aa).

The next 9 helical transmembrane spans lie at 29-49 (VMSL…GHMN), 50-70 (PVLA…SGAL), 90-110 (IPAG…LSAF), 117-137 (LMVN…YAVI), 150-170 (IVIG…AATG), 177-197 (LVLF…LSLF), 223-243 (ALFY…MGFA), 246-266 (FYGV…WRLW), and 292-312 (IFAV…FGVF).

This sequence belongs to the UbiA prenyltransferase family. Protoheme IX farnesyltransferase subfamily.

It localises to the cell inner membrane. The enzyme catalyses heme b + (2E,6E)-farnesyl diphosphate + H2O = Fe(II)-heme o + diphosphate. It participates in porphyrin-containing compound metabolism; heme O biosynthesis; heme O from protoheme: step 1/1. In terms of biological role, converts heme B (protoheme IX) to heme O by substitution of the vinyl group on carbon 2 of heme B porphyrin ring with a hydroxyethyl farnesyl side group. The chain is Protoheme IX farnesyltransferase from Brucella melitensis biotype 1 (strain ATCC 23456 / CCUG 17765 / NCTC 10094 / 16M).